The following is a 390-amino-acid chain: Chorismate synthase 1 (390 aa).

The NADP(+) site is built by R39 and R45. A disordered region spans residues 95-117; sequence EQEEKEMKRKVTKPRPGHADLNG. Residues 132 to 134, 253 to 254, G298, 313 to 317, and R339 contribute to the FMN site; these read RSS, NA, and KPIPT.

This sequence belongs to the chorismate synthase family. Homotetramer. FMNH2 is required as a cofactor.

It carries out the reaction 5-O-(1-carboxyvinyl)-3-phosphoshikimate = chorismate + phosphate. Its pathway is metabolic intermediate biosynthesis; chorismate biosynthesis; chorismate from D-erythrose 4-phosphate and phosphoenolpyruvate: step 7/7. Functionally, catalyzes the anti-1,4-elimination of the C-3 phosphate and the C-6 proR hydrogen from 5-enolpyruvylshikimate-3-phosphate (EPSP) to yield chorismate, which is the branch point compound that serves as the starting substrate for the three terminal pathways of aromatic amino acid biosynthesis. This reaction introduces a second double bond into the aromatic ring system. This is Chorismate synthase 1 from Bacillus cereus (strain ZK / E33L).